Consider the following 295-residue polypeptide: uncharacterized protein (295 aa).

An N-terminal signal peptide occupies residues 1 to 19 (MHKLLLIITVFSTFNVAQA).

This is an uncharacterized protein from Rickettsia typhi (strain ATCC VR-144 / Wilmington).